The chain runs to 626 residues: Chaperone protein HtpG (626 aa).

The interval 1–339 (MSTNQETRGF…SNDLPLNVSR (339 aa)) is a; substrate-binding. The tract at residues 340–555 (EILQDNKVTA…NDQMTTQMAK (216 aa)) is b. A c region spans residues 556–626 (LFAAAGQPVP…FIKRVNSLLS (71 aa)).

This sequence belongs to the heat shock protein 90 family. As to quaternary structure, homodimer.

It is found in the cytoplasm. Its function is as follows. Molecular chaperone. Has ATPase activity. This chain is Chaperone protein HtpG, found in Histophilus somni (strain 129Pt) (Haemophilus somnus).